Here is a 199-residue protein sequence, read N- to C-terminus: NAD(P)H dehydrogenase (quinone) (199 aa).

One can recognise a Flavodoxin-like domain in the interval methionine 4–valine 190. FMN contacts are provided by residues serine 10–methionine 15 and threonine 78–tyrosine 80. Tyrosine 12 contributes to the NAD(+) binding site. Substrate is bound at residue tryptophan 98. FMN contacts are provided by residues serine 113–glycine 119 and histidine 134. The segment at glycine 162–aspartate 181 is disordered. Positions methionine 163–alanine 177 are enriched in polar residues.

It belongs to the WrbA family. The cofactor is FMN.

The enzyme catalyses a quinone + NADH + H(+) = a quinol + NAD(+). It carries out the reaction a quinone + NADPH + H(+) = a quinol + NADP(+). The chain is NAD(P)H dehydrogenase (quinone) from Brucella suis (strain ATCC 23445 / NCTC 10510).